We begin with the raw amino-acid sequence, 98 residues long: Secreted LysM effector Mgx1LysM (98 aa).

The first 18 residues, 1–18, serve as a signal peptide directing secretion; that stretch reads MKVTTIIAALLSVAVVDA. Disulfide bonds link Cys31–Cys89 and Cys62–Cys97. Residues 37–85 form the LysM domain; that stretch reads IPYVVKKGDTLTHIAHDIYKRKVGICDLAYTNHIGKNPNLIYAGQTLLI. Residues Gly44, Thr48, Asn75, and Ile77 each coordinate chitin.

Belongs to the secreted LysM effector family. In terms of assembly, forms homodimers in a chitin-independent manner through interactions at the N-termini of Mgx1LysM monomers. Homodimers are further polymerized in a chitin-dependent manner.

The protein resides in the secreted. Its subcellular location is the cell wall. Secreted effector that enables the plant pathogenic fungus to manipulate host defenses for successful infection. Binds chitin and suppresses the chitin-induced reactive oxygen species (ROS) burst. Chitin-induced polymerization of homodimers forms a contiguous Mg1LysM highly oligomeric super-complexe that is anchored to the chitin in the fungal cell wall to prevent hydrolysis by host chitinases. The chain is Secreted LysM effector Mgx1LysM from Zymoseptoria tritici (strain ST99CH_3D7).